A 361-amino-acid chain; its full sequence is KDEL-tailed cysteine endopeptidase CEP2 (361 aa).

Positions 1–20 (MKKLLLIFLFSLVILQTACG) are cleaved as a signal peptide. The propeptide at 21 to 127 (FDYDDKEIES…FMYDHENLSK (107 aa)) is activation peptide. N-linked (GlcNAc...) asparagine glycans are attached at residues Asn-75 and Asn-124. 3 disulfide bridges follow: Cys-149–Cys-191, Cys-183–Cys-224, and Cys-282–Cys-333. Cys-152 is a catalytic residue. Catalysis depends on residues His-288 and Asn-308. The Prevents secretion from ER motif lies at 358–361 (KDEL).

It belongs to the peptidase C1 family. Expressed in roots, stems, rosette and cauline leaves, flowers, buds and green siliques. Found in the tip of young primary leaves, in very young root tips and at later stages in all tissues of lateral root, including the vascular bundle. Not expressed in lateral root primordia, while directly emerging through the epidermis.

Its subcellular location is the endoplasmic reticulum. In terms of biological role, involved in the final stage of developmental programmed cell death and in intercalation of new cells. Cleaves extensins, thus probably supporting the final cell collapse. The chain is KDEL-tailed cysteine endopeptidase CEP2 from Arabidopsis thaliana (Mouse-ear cress).